Reading from the N-terminus, the 345-residue chain is Anthranilate phosphoribosyltransferase (345 aa).

Residues Gly-84, 87 to 88 (GD), Thr-92, 94 to 97 (NIST), 112 to 120 (KHGNRSVSS), and Ser-124 each bind 5-phospho-alpha-D-ribose 1-diphosphate. Gly-84 is an anthranilate binding site. Ser-96 is a binding site for Mg(2+). Residue Asn-115 participates in anthranilate binding. Arg-170 provides a ligand contact to anthranilate. Positions 229 and 230 each coordinate Mg(2+).

It belongs to the anthranilate phosphoribosyltransferase family. As to quaternary structure, homodimer. Requires Mg(2+) as cofactor.

It carries out the reaction N-(5-phospho-beta-D-ribosyl)anthranilate + diphosphate = 5-phospho-alpha-D-ribose 1-diphosphate + anthranilate. Its pathway is amino-acid biosynthesis; L-tryptophan biosynthesis; L-tryptophan from chorismate: step 2/5. In terms of biological role, catalyzes the transfer of the phosphoribosyl group of 5-phosphorylribose-1-pyrophosphate (PRPP) to anthranilate to yield N-(5'-phosphoribosyl)-anthranilate (PRA). This Xanthomonas axonopodis pv. citri (strain 306) protein is Anthranilate phosphoribosyltransferase.